The sequence spans 303 residues: Vesicle-trafficking protein SEC22c (303 aa).

Residues 1 to 183 are Cytoplasmic-facing; the sequence is MSLILFACVV…EPAPSFRMEP (183 aa). Residues 8–119 form the Longin domain; that stretch reads CVVRVRDGLP…YAFLEFDNVI (112 aa). Residues 184-204 form a helical membrane-spanning segment; sequence VTALGILSLILNIMCAALNLI. At 205–223 the chain is on the lumenal side; the sequence is RGIHLAEHSLQVAHEEIGN. The helical transmembrane segment at 224–244 threads the bilayer; sequence ILAFLIPFVACIFQCYLYLFY. Residues 245–248 lie on the Cytoplasmic side of the membrane; it reads SPAR. The helical transmembrane segment at 249 to 269 threads the bilayer; that stretch reads TMKVVLMLLFICLGNVYLHGL. R270 is a topological domain (lumenal). A helical membrane pass occupies residues 271-291; it reads NLWQILFHIGVAFLSSHQILT. The Cytoplasmic segment spans residues 292–303; sequence RQLQDKQSDCGV.

Belongs to the synaptobrevin family.

The protein resides in the endoplasmic reticulum membrane. May be involved in vesicle transport between the ER and the Golgi complex. The polypeptide is Vesicle-trafficking protein SEC22c (SEC22C) (Bos taurus (Bovine)).